Reading from the N-terminus, the 208-residue chain is Methylthioribulose-1-phosphate dehydratase (208 aa).

Zn(2+) is bound by residues H96 and H98.

It belongs to the aldolase class II family. MtnB subfamily. Zn(2+) is required as a cofactor.

It carries out the reaction 5-(methylsulfanyl)-D-ribulose 1-phosphate = 5-methylsulfanyl-2,3-dioxopentyl phosphate + H2O. It functions in the pathway amino-acid biosynthesis; L-methionine biosynthesis via salvage pathway; L-methionine from S-methyl-5-thio-alpha-D-ribose 1-phosphate: step 2/6. In terms of biological role, catalyzes the dehydration of methylthioribulose-1-phosphate (MTRu-1-P) into 2,3-diketo-5-methylthiopentyl-1-phosphate (DK-MTP-1-P). This chain is Methylthioribulose-1-phosphate dehydratase, found in Pseudomonas fluorescens (strain Pf0-1).